Here is a 352-residue protein sequence, read N- to C-terminus: Heat-inducible transcription repressor HrcA (352 aa).

It belongs to the HrcA family.

Negative regulator of class I heat shock genes (grpE-dnaK-dnaJ and groELS operons). Prevents heat-shock induction of these operons. The polypeptide is Heat-inducible transcription repressor HrcA (Latilactobacillus sakei (Lactobacillus sakei)).